The following is a 246-amino-acid chain: 14-3-3 protein beta/alpha (246 aa).

Met-1 is subject to N-acetylmethionine. N-acetylthreonine; in 14-3-3 protein beta/alpha, N-terminally processed is present on Thr-2. A Phosphothreonine modification is found at Thr-2. Lys-5 is subject to N6-acetyllysine. Lys-51 bears the N6-acetyllysine; alternate mark. Lys-51 is covalently cross-linked (Glycyl lysine isopeptide (Lys-Gly) (interchain with G-Cter in SUMO2); alternate). Ser-60 is subject to Phosphoserine. The residue at position 70 (Lys-70) is an N6-acetyllysine. A 3'-nitrotyrosine mark is found at Tyr-84 and Tyr-106. Lys-117 carries the post-translational modification N6-acetyllysine. Ser-186 and Ser-232 each carry phosphoserine.

This sequence belongs to the 14-3-3 family. Homodimer. Interacts with SAMSN1 and PRKCE. Interacts with AKAP13. Interacts with SSH1 and TORC2/CRTC2. Interacts with ABL1; the interaction results in cytoplasmic location of ABL1 and inhibition of cABL-mediated apoptosis. Interacts with ROR2 (dimer); the interaction results in phosphorylation of YWHAB on tyrosine residues. Interacts with GAB2. Interacts with YAP1 (phosphorylated form). Interacts with the phosphorylated (by AKT1) form of SRPK2. Interacts with PKA-phosphorylated AANAT. Interacts with MYO1C. Interacts with SIRT2. Interacts with the 'Thr-369' phosphorylated form of DAPK2. Interacts with PI4KB, TBC1D22A and TBC1D22B. Interacts with the 'Ser-1134' and 'Ser-1161' phosphorylated form of SOS1. Interacts (via phosphorylated form) with YWHAB; this interaction occurs in a protein kinase AKT1-dependent manner. Interacts with SLITRK1. Interacts with SYNPO2 (phosphorylated form); YWHAB competes with ACTN2 for interaction with SYNPO2. Interacts with RIPOR2 (via phosphorylated form); this interaction occurs in a chemokine-dependent manner and does not compete for binding of RIPOR2 with RHOA nor blocks inhibition of RIPOR2-mediated RHOA activity. Interacts with MARK2 and MARK3. Interacts with TESK1; the interaction is dependent on the phosphorylation of TESK1 'Ser-439' and inhibits TESK1 kinase activity. Interacts with MEFV. Interacts with HDAC4. Interacts with ADAM22 (via C-terminus). The alpha, brain-specific form differs from the beta form in being phosphorylated. Phosphorylated on Ser-60 by protein kinase C delta type catalytic subunit in a sphingosine-dependent fashion. Post-translationally, isoform Short contains a N-acetylmethionine at position 1.

It localises to the cytoplasm. Its subcellular location is the melanosome. Its function is as follows. Adapter protein implicated in the regulation of a large spectrum of both general and specialized signaling pathways. Binds to a large number of partners, usually by recognition of a phosphoserine or phosphothreonine motif. Binding generally results in the modulation of the activity of the binding partner. Negative regulator of osteogenesis. Blocks the nuclear translocation of the phosphorylated form (by AKT1) of SRPK2 and antagonizes its stimulatory effect on cyclin D1 expression resulting in blockage of neuronal apoptosis elicited by SRPK2. Negative regulator of signaling cascades that mediate activation of MAP kinases via AKAP13. The polypeptide is 14-3-3 protein beta/alpha (Ywhab) (Rattus norvegicus (Rat)).